Here is a 705-residue protein sequence, read N- to C-terminus: Putative membrane protein SCO6666 (705 aa).

The next 13 helical transmembrane spans lie at 16–36, 144–164, 177–197, 201–221, 232–252, 280–300, 306–326, 360–380, 504–524, 528–548, 561–581, 615–635, and 636–656; these read VMLL…GVFG, LHGI…PLLG, NAEL…FGGL, GLPL…LFGF, IQVT…LMLV, LFSG…PSTF, LAVA…LPAL, VAVL…VTGM, ALTV…SVLL, TVAT…WVFQ, LGAL…GLAM, VVTC…TGGF, and SPIL…ATVV.

This sequence belongs to the resistance-nodulation-cell division (RND) (TC 2.A.6) family. MmpL subfamily.

It localises to the cell membrane. The sequence is that of Putative membrane protein SCO6666 from Streptomyces coelicolor (strain ATCC BAA-471 / A3(2) / M145).